We begin with the raw amino-acid sequence, 239 residues long: Proteasome subunit beta type-6 (239 aa).

The residue at position 2 (alanine 2) is an N-acetylalanine. Positions 2-34 are cleaved as a propeptide — removed in mature form; sequence AATLLAARGAGPAPAWGPEAFTPDWESREVSTG. The Nucleophile role is filled by threonine 35. Threonine 69 is modified (phosphothreonine).

The protein belongs to the peptidase T1B family. In terms of assembly, the 26S proteasome consists of a 20S proteasome core and two 19S regulatory subunits. The 20S proteasome core is a barrel-shaped complex made of 28 subunits that are arranged in four stacked rings. The two outer rings are each formed by seven alpha subunits, and the two inner rings are formed by seven beta subunits. The proteolytic activity is exerted by three beta-subunits PSMB5, PSMB6 and PSMB7. As to quaternary structure, (Microbial infection) Interacts with HIV-1 protein Tat.

Its subcellular location is the cytoplasm. It is found in the nucleus. It catalyses the reaction Cleavage of peptide bonds with very broad specificity.. Component of the 20S core proteasome complex involved in the proteolytic degradation of most intracellular proteins. This complex plays numerous essential roles within the cell by associating with different regulatory particles. Associated with two 19S regulatory particles, forms the 26S proteasome and thus participates in the ATP-dependent degradation of ubiquitinated proteins. The 26S proteasome plays a key role in the maintenance of protein homeostasis by removing misfolded or damaged proteins that could impair cellular functions, and by removing proteins whose functions are no longer required. Associated with the PA200 or PA28, the 20S proteasome mediates ubiquitin-independent protein degradation. This type of proteolysis is required in several pathways including spermatogenesis (20S-PA200 complex) or generation of a subset of MHC class I-presented antigenic peptides (20S-PA28 complex). Within the 20S core complex, PSMB6 displays a peptidylglutamyl-hydrolizing activity also termed postacidic or caspase-like activity, meaning that the peptides bond hydrolysis occurs directly after acidic residues. This is Proteasome subunit beta type-6 from Homo sapiens (Human).